The primary structure comprises 1451 residues: MAYYTDSSSSESEDFEDVINQVVAEEDITGAAWYDGHLSEEDSPGGKPRPKEQLPKDIVKMDARAYQLEMLEASLKENIICAMDTGSGKTHVAILRIKAELEEMPEGQVVWFLTPTVSLCAQQYAVVKAQIPSVQTKIVTGADKVDSWSSTTWDGALLNVKVIITTPQVLLDALLHGFVNISSLALMVFDEAHHCNKNHAYSRVMKEFYWESKTKHEPVPRILGLTASPVVRSDISSLKRLESTLDAVCRSPTRHREELIANSQRPALFSIIYNPKLQPYAAGFSESLTKLMAARNKLNILEDPYVVSLRAEISDRSRRKLEKAIKEKRTYVQDTMKSFCRRSMEMAKELGAWAADWFISEAIRLFLAGIYRQGASSKSFRDAEVIFLARVFQDANIEPPPPLTTHSGLSEKVQRIIEVLLNYDKDARAICFVKERATTVVLSHILTTHPEVSSKFRIGTMVGTSFVPGVKRDFLDLPETGGSQCLEAFREGRKNMLVATSVLEEGIDVPACNLIICFDKPNNLRAFIQRRGRARMRQSHLYLFVEDEAEADWEALEAQMKLQYEDEKREHERLEAIENSEALDYPEELRVESTGARLTINDAKSHLQHFVSTLASRKFVQTQPDYLIEKVSQGYQPGDQPLLKATVLLPVSVPQALRQVTSSRTWVSEKNACMDAAFQAYKALYEAGLVDDHLLPLRDRLELELEVRPGMREVRGLYNPWLSIAAACTQGDVPLCRRALKVSDGNNSELCEFELAIPVALPEMKPMVVWWDHRAQLTLRIDSDAVMADTDVRHADQTTINQQDHTSVLLSLAYGHRNMTIRDDCILRLVSKSGPLSMEQLGQVEFAPGLVTANGSSYLVRDERDQSRHPYYFESVLPSKPPAESIRKVYRGFDEDPTEATYLSVRKWPKKTGFFHRPCSPQHSPSTKPYAYILPAETTTVDRIPLVYAQMGLLMPSLVCYTELYLVAAELSRKVLAPLRISNVSMLVEAICAKSARTPENYERIEFLGDSILKTCITVNLAATKLHLPEGILSLMKDRLVSNARLCRAACDAELDQFLVTQQLVTKGWQPPYMSDLAKQDQEPESKRILSPKTLADVVEALIGVSFVDGGLPKALECIRLFIPESQPRPFSEVRDILFGAAEPKGMKLPADLQLLEQLIEYSFCEKALLVEAVTHPSYNVSGTVACYDRLEFIGDAILDYIIVEEVFALEPALENWQMHLLRTALVNADILGFLIMEWSYKQMGFEVCRANEGDSDSKSSGDSTSDKASPRLEQTEVPIPLWSFMRQSSAELTMEREITKARFEELRDPILEAMRSGTHYPWALFARLHAQKFYSDFFEALVGAIWVDAGPGFDACRAFVARSGVLPYLKRLLRDQVHVLHPKEELGRLAGRERVEYVVKETLKDDGDGKEWACEVRVGGRYVTDVTGCLFKEESRVKAATQACEILKRK.

The interval 34–53 is disordered; it reads YDGHLSEEDSPGGKPRPKEQ. The 178-residue stretch at 70–247 folds into the Helicase ATP-binding domain; that stretch reads MLEASLKENI…LKRLESTLDA (178 aa). 83-90 contributes to the ATP binding site; it reads MDTGSGKT. The DEAH box signature appears at 190-193; it reads DEAH. Residues 412–582 enclose the Helicase C-terminal domain; the sequence is KVQRIIEVLL…RLEAIENSEA (171 aa). The Dicer dsRNA-binding fold domain occupies 603–704; the sequence is AKSHLQHFVS…LPLRDRLELE (102 aa). RNase III domains follow at residues 968 to 1111 and 1153 to 1351; these read AAEL…VDGG and LQLL…VDAG. E1192 lines the Mg(2+) pocket. A disordered region spans residues 1253 to 1272; the sequence is EGDSDSKSSGDSTSDKASPR. D1337 and E1340 together coordinate Mg(2+).

This sequence belongs to the helicase family. Dicer subfamily. It depends on Mg(2+) as a cofactor. Requires Mn(2+) as cofactor.

Its function is as follows. Dicer-like endonuclease involved in cleaving double-stranded RNA in the RNA interference (RNAi) pathway. Produces 21 to 25 bp dsRNAs (siRNAs) which target the selective destruction of homologous RNAs leading to sequence-specific suppression of gene expression, called post-transcriptional gene silencing (PTGS). Part of a broad host defense, DCL-2 is involved in antiviral defense against mycoviruses like the hypovirus CHV1-EP713 and the reovirus MyRV1-Cp9B21. The protein is Dicer-like protein 2 (DCL-2) of Cryphonectria parasitica (Chestnut blight fungus).